The sequence spans 186 residues: FMN reductase (NADPH) (186 aa).

It belongs to the SsuE family.

The catalysed reaction is FMNH2 + NADP(+) = FMN + NADPH + 2 H(+). In Pseudomonas aeruginosa (strain ATCC 15692 / DSM 22644 / CIP 104116 / JCM 14847 / LMG 12228 / 1C / PRS 101 / PAO1), this protein is FMN reductase (NADPH) (msuE).